A 313-amino-acid polypeptide reads, in one-letter code: Ribosomal RNA small subunit methyltransferase H (313 aa).

Residues 31-33, Asp51, Phe77, Asp95, and Gln102 contribute to the S-adenosyl-L-methionine site; that span reads GGH.

Belongs to the methyltransferase superfamily. RsmH family.

It localises to the cytoplasm. It catalyses the reaction cytidine(1402) in 16S rRNA + S-adenosyl-L-methionine = N(4)-methylcytidine(1402) in 16S rRNA + S-adenosyl-L-homocysteine + H(+). In terms of biological role, specifically methylates the N4 position of cytidine in position 1402 (C1402) of 16S rRNA. This is Ribosomal RNA small subunit methyltransferase H from Xylella fastidiosa (strain M23).